The primary structure comprises 276 residues: ATP synthase subunit a 2 (276 aa).

The next 5 helical transmembrane spans lie at 45-65 (AVHVDSLGWSIALGALFVWLF), 105-125 (VIAPLALTVFCWIFLMNLMDL), 154-173 (VNVTLGMSLSVFFLIIYYSI), 226-246 (LLFILIALMPFWAQWALSVPW), and 247-267 (AIFHILVIVLQAFIFMMLTIV).

The protein belongs to the ATPase A chain family. F-type ATPases have 2 components, CF(1) - the catalytic core - and CF(0) - the membrane proton channel. CF(1) has five subunits: alpha(3), beta(3), gamma(1), delta(1), epsilon(1). CF(0) has three main subunits: a(1), b(2) and c(9-12). The alpha and beta chains form an alternating ring which encloses part of the gamma chain. CF(1) is attached to CF(0) by a central stalk formed by the gamma and epsilon chains, while a peripheral stalk is formed by the delta and b chains.

It localises to the cell inner membrane. Key component of the proton channel; it plays a direct role in the translocation of protons across the membrane. The polypeptide is ATP synthase subunit a 2 (Hahella chejuensis (strain KCTC 2396)).